Reading from the N-terminus, the 215-residue chain is Cytochrome b6 (215 aa).

A helical membrane pass occupies residues 32-52 (IFYCLGGITLTCFLVQVATGF). Cysteine 35 is a binding site for heme c. Heme b is bound by residues histidine 86 and histidine 100. 3 helical membrane-spanning segments follow: residues 90-110 (ASMM…TGGF), 116-136 (LTWV…VTGY), and 186-206 (LHTF…FLMI). Residues histidine 187 and histidine 202 each coordinate heme b.

This sequence belongs to the cytochrome b family. PetB subfamily. As to quaternary structure, the 4 large subunits of the cytochrome b6-f complex are cytochrome b6, subunit IV (17 kDa polypeptide, PetD), cytochrome f and the Rieske protein, while the 4 small subunits are PetG, PetL, PetM and PetN. The complex functions as a dimer. Heme b serves as cofactor. Heme c is required as a cofactor.

Its subcellular location is the plastid. It localises to the chloroplast thylakoid membrane. Component of the cytochrome b6-f complex, which mediates electron transfer between photosystem II (PSII) and photosystem I (PSI), cyclic electron flow around PSI, and state transitions. In Klebsormidium bilatum (Filamentous green alga), this protein is Cytochrome b6.